A 672-amino-acid polypeptide reads, in one-letter code: Glycogen [starch] synthase (672 aa).

Lys-56 contributes to the UDP-alpha-D-glucose binding site. Residues 645–672 (MRDNEGKVPSAATSRRPSIHSSDGEDDE) form a disordered region. The segment covering 655–665 (AATSRRPSIHS) has biased composition (polar residues).

This sequence belongs to the glycosyltransferase 3 family. In terms of assembly, forms a hetero-octamer with each protomer of the gsy-1 homotetramer bound to one molecule of gyg-1. The N-terminus is involved in interprotomer contacts with gyg-1. The interaction with gyg-1 is required for glycogen production but is not required for gsy-1 intrinsic activity.

The catalysed reaction is [(1-&gt;4)-alpha-D-glucosyl](n) + UDP-alpha-D-glucose = [(1-&gt;4)-alpha-D-glucosyl](n+1) + UDP + H(+). Its pathway is glycan biosynthesis; glycogen biosynthesis. Functionally, transfers the glycosyl residue from UDP-Glc to the non-reducing end of alpha-1,4-glucan. This Caenorhabditis elegans protein is Glycogen [starch] synthase.